Consider the following 175-residue polypeptide: Ribosome-binding factor A (175 aa).

The tract at residues 125 to 175 (TAKHAGEADPYKSDAPEDVDIDEDDFDEEDIDLAGDDDIDEDANKDADSSK) is disordered. The segment covering 128-139 (HAGEADPYKSDA) has biased composition (basic and acidic residues). Over residues 140-165 (PEDVDIDEDDFDEEDIDLAGDDDIDE) the composition is skewed to acidic residues. Basic and acidic residues predominate over residues 166–175 (DANKDADSSK).

It belongs to the RbfA family. Monomer. Binds 30S ribosomal subunits, but not 50S ribosomal subunits or 70S ribosomes.

It localises to the cytoplasm. Its function is as follows. One of several proteins that assist in the late maturation steps of the functional core of the 30S ribosomal subunit. Associates with free 30S ribosomal subunits (but not with 30S subunits that are part of 70S ribosomes or polysomes). Required for efficient processing of 16S rRNA. May interact with the 5'-terminal helix region of 16S rRNA. The sequence is that of Ribosome-binding factor A from Pseudarthrobacter chlorophenolicus (strain ATCC 700700 / DSM 12829 / CIP 107037 / JCM 12360 / KCTC 9906 / NCIMB 13794 / A6) (Arthrobacter chlorophenolicus).